We begin with the raw amino-acid sequence, 419 residues long: UDP-N-acetylglucosamine 1-carboxyvinyltransferase (419 aa).

22–23 (KN) serves as a coordination point for phosphoenolpyruvate. R91 contributes to the UDP-N-acetyl-alpha-D-glucosamine binding site. C115 functions as the Proton donor in the catalytic mechanism. At C115 the chain carries 2-(S-cysteinyl)pyruvic acid O-phosphothioketal. UDP-N-acetyl-alpha-D-glucosamine contacts are provided by residues 120–124 (RPVDL), 160–163 (KVSV), D305, and I327.

Belongs to the EPSP synthase family. MurA subfamily.

It localises to the cytoplasm. It carries out the reaction phosphoenolpyruvate + UDP-N-acetyl-alpha-D-glucosamine = UDP-N-acetyl-3-O-(1-carboxyvinyl)-alpha-D-glucosamine + phosphate. The protein operates within cell wall biogenesis; peptidoglycan biosynthesis. In vitro inhibited by covalent binding of fosfomycin and the fungal product terreic acid in the presence of substrate UDP-N-acetylglucosamine, with an inactivation rate constant of 130 M(-1)sec(-1) for terreic acid. Its function is as follows. Cell wall formation. Adds enolpyruvyl to UDP-N-acetylglucosamine. Target for the antibiotic fosfomycin. The chain is UDP-N-acetylglucosamine 1-carboxyvinyltransferase from Enterobacter cloacae subsp. cloacae (strain ATCC 13047 / DSM 30054 / NBRC 13535 / NCTC 10005 / WDCM 00083 / NCDC 279-56).